The chain runs to 892 residues: Zinc finger protein 512B (892 aa).

The tract at residues Met-1 to Gln-82 is disordered. A compositionally biased stretch (low complexity) spans Gly-8 to Gly-19. The C2H2-type 1; atypical zinc finger occupies Val-105–Cys-129. The C2H2-type 2 zinc-finger motif lies at Phe-140 to His-163. Disordered regions lie at residues Met-323–Val-473 and Glu-562–Glu-582. The segment covering Ser-371–Thr-384 has biased composition (polar residues). A compositionally biased stretch (low complexity) spans Ser-385–Gly-398. The residue at position 409 (Ser-409) is a Phosphoserine. Positions Thr-418 to Lys-428 are enriched in basic residues. A NuRD interaction motif motif is present at residues Arg-421–Pro-427. The C2H2-type 3 zinc-finger motif lies at Leu-540–His-563. Residues Leu-594 to Cys-618 form a C2H2-type 4; atypical zinc finger. A C2H2-type 5 zinc finger spans residues Phe-630–His-653. A disordered region spans residues Val-649–Val-682. Ser-686 bears the Phosphoserine mark. A C2H2-type 6; atypical zinc finger spans residues Val-750 to Cys-774. The C2H2-type 7 zinc finger occupies Tyr-784–His-807. The disordered stretch occupies residues Phe-812–Lys-892. Basic and acidic residues predominate over residues Pro-819–Lys-831. Basic residues predominate over residues Lys-832–Lys-849. Positions Glu-850–Ala-876 are enriched in basic and acidic residues.

The protein belongs to the krueppel C2H2-type zinc-finger protein family. As to quaternary structure, interacts (via its NuRD interaction motif) with RBBP4 of the nucleosome remodeling and deacetylase (NuRD) complex; the interaction is direct and may play a role in repressing gene expression.

It localises to the nucleus. Functionally, involved in transcriptional regulation by repressing gene expression. Associates with the nucleosome remodeling and histone deacetylase (NuRD) complex, which promotes transcriptional repression by histone deacetylation and nucleosome remodeling. The protein is Zinc finger protein 512B (ZNF512B) of Homo sapiens (Human).